Reading from the N-terminus, the 330-residue chain is Probable inactive heme oxygenase 2, chloroplastic (330 aa).

Composition is skewed to low complexity over residues 1–13 (MPLAAAVAASAVV) and 56–69 (AAEAEAEAVAVDEA). 3 disordered regions span residues 1 to 27 (MPLAAAVAASAVVPPRPPPPPPRRARP), 50 to 82 (PSPPAPAAEAEAEAVAVDEAPPAKPRPRRYPRQ), and 107 to 156 (TTLK…LEGE). The transit peptide at 1–47 (MPLAAAVAASAVVPPRPPPPPPRRARPLRSFTGLILTRDLAALTVAR) directs the protein to the chloroplast. The span at 114–151 (TGAEEEVGDGVSEDASASEEEEEEEDDDDVVEEEEEGA) shows a compositional bias: acidic residues.

Belongs to the heme oxygenase family.

It localises to the plastid. It is found in the chloroplast. In terms of biological role, probable inactive heme oxygenase that may play a role in the regulation of phytochrome assembly and photomorphogenesis. This chain is Probable inactive heme oxygenase 2, chloroplastic (HO2), found in Oryza sativa subsp. japonica (Rice).